The chain runs to 114 residues: T cell receptor beta variable 5-8 (114 aa).

An N-terminal signal peptide occupies residues 1–21 (MGPRLLFWALLCLLGTGPVEA). One can recognise an Ig-like domain in the interval 22-114 (GVTQSPTHLI…SALYLCASSL (93 aa)). Cys42 and Cys110 are joined by a disulfide. N-linked (GlcNAc...) asparagine glycosylation is present at Asn90.

In terms of assembly, alpha-beta TR is a heterodimer composed of an alpha and beta chain; disulfide-linked. The alpha-beta TR is associated with the transmembrane signaling CD3 coreceptor proteins to form the TR-CD3 (TcR or TCR). The assembly of alpha-beta TR heterodimers with CD3 occurs in the endoplasmic reticulum where a single alpha-beta TR heterodimer associates with one CD3D-CD3E heterodimer, one CD3G-CD3E heterodimer and one CD247 homodimer forming a stable octameric structure. CD3D-CD3E and CD3G-CD3E heterodimers preferentially associate with TR alpha and TR beta chains, respectively. The association of the CD247 homodimer is the last step of TcR assembly in the endoplasmic reticulum and is required for transport to the cell surface.

It is found in the cell membrane. Functionally, v region of the variable domain of T cell receptor (TR) beta chain that participates in the antigen recognition. Alpha-beta T cell receptors are antigen specific receptors which are essential to the immune response and are present on the cell surface of T lymphocytes. Recognize peptide-major histocompatibility (MH) (pMH) complexes that are displayed by antigen presenting cells (APC), a prerequisite for efficient T cell adaptive immunity against pathogens. Binding of alpha-beta TR to pMH complex initiates TR-CD3 clustering on the cell surface and intracellular activation of LCK that phosphorylates the ITAM motifs of CD3G, CD3D, CD3E and CD247 enabling the recruitment of ZAP70. In turn ZAP70 phosphorylates LAT, which recruits numerous signaling molecules to form the LAT signalosome. The LAT signalosome propagates signal branching to three major signaling pathways, the calcium, the mitogen-activated protein kinase (MAPK) kinase and the nuclear factor NF-kappa-B (NF-kB) pathways, leading to the mobilization of transcription factors that are critical for gene expression and essential for T cell growth and differentiation. The T cell repertoire is generated in the thymus, by V-(D)-J rearrangement. This repertoire is then shaped by intrathymic selection events to generate a peripheral T cell pool of self-MH restricted, non-autoaggressive T cells. Post-thymic interaction of alpha-beta TR with the pMH complexes shapes TR structural and functional avidity. The chain is T cell receptor beta variable 5-8 from Homo sapiens (Human).